A 229-amino-acid chain; its full sequence is MTTMAETQTWQTVLGEEKQEPYFQEILDFVKKERKAGKIIYPPQKDIFNALKLTPYEAIKVVILGQDPYHGPNQAHGLAFSVRPGVPAPPSLQNIFKELHADLGVSIPSHGFLEKWAKQGVLLLNAALTVEAGKPQSHANIGWHRFTDKVIESLNDHPEGIVFLLWGSYAQKKSQLITNLRHRILKAPHPSPLSAARGFLGCRHFSKANQLLHEMGRGEIDWALDEKVS.

The Proton acceptor role is filled by D67.

Belongs to the uracil-DNA glycosylase (UDG) superfamily. UNG family.

Its subcellular location is the cytoplasm. The catalysed reaction is Hydrolyzes single-stranded DNA or mismatched double-stranded DNA and polynucleotides, releasing free uracil.. In terms of biological role, excises uracil residues from the DNA which can arise as a result of misincorporation of dUMP residues by DNA polymerase or due to deamination of cytosine. The protein is Uracil-DNA glycosylase of Coxiella burnetii (strain RSA 493 / Nine Mile phase I).